The sequence spans 606 residues: 4-hydroxy-3-methylbut-2-en-1-yl diphosphate synthase (flavodoxin) (606 aa).

[4Fe-4S] cluster contacts are provided by cysteine 513, cysteine 516, cysteine 547, and glutamate 554.

It belongs to the IspG family. Requires [4Fe-4S] cluster as cofactor.

The catalysed reaction is (2E)-4-hydroxy-3-methylbut-2-enyl diphosphate + oxidized [flavodoxin] + H2O + 2 H(+) = 2-C-methyl-D-erythritol 2,4-cyclic diphosphate + reduced [flavodoxin]. Its pathway is isoprenoid biosynthesis; isopentenyl diphosphate biosynthesis via DXP pathway; isopentenyl diphosphate from 1-deoxy-D-xylulose 5-phosphate: step 5/6. Functionally, converts 2C-methyl-D-erythritol 2,4-cyclodiphosphate (ME-2,4cPP) into 1-hydroxy-2-methyl-2-(E)-butenyl 4-diphosphate. The sequence is that of 4-hydroxy-3-methylbut-2-en-1-yl diphosphate synthase (flavodoxin) from Chlamydia felis (strain Fe/C-56) (Chlamydophila felis).